The following is a 432-amino-acid chain: Trigger factor (432 aa).

The region spanning Gly-161 to Pro-246 is the PPIase FKBP-type domain.

The protein belongs to the FKBP-type PPIase family. Tig subfamily.

It localises to the cytoplasm. It catalyses the reaction [protein]-peptidylproline (omega=180) = [protein]-peptidylproline (omega=0). Involved in protein export. Acts as a chaperone by maintaining the newly synthesized protein in an open conformation. Functions as a peptidyl-prolyl cis-trans isomerase. The sequence is that of Trigger factor from Vibrio atlanticus (strain LGP32) (Vibrio splendidus (strain Mel32)).